A 123-amino-acid polypeptide reads, in one-letter code: UPF0102 protein PFL_5073 (123 aa).

It belongs to the UPF0102 family.

This is UPF0102 protein PFL_5073 from Pseudomonas fluorescens (strain ATCC BAA-477 / NRRL B-23932 / Pf-5).